Consider the following 414-residue polypeptide: Coenzyme A biosynthesis bifunctional protein CoaBC (414 aa).

Residues 1-191 (MSARKRIVVG…ALPYDMAGVK (191 aa)) form a phosphopantothenoylcysteine decarboxylase region. The phosphopantothenate--cysteine ligase stretch occupies residues 192 to 414 (ALVTAGGTRE…IAAFLKSQDG (223 aa)). Residues 275 to 277 (MAA), Asp-281, Lys-291, 293 to 294 (KK), 308 to 311 (DDVL), Phe-332, Lys-350, and Lys-354 contribute to the CTP site.

It in the N-terminal section; belongs to the HFCD (homo-oligomeric flavin containing Cys decarboxylase) superfamily. This sequence in the C-terminal section; belongs to the PPC synthetase family. In terms of assembly, homododecamer. Mg(2+) serves as cofactor. The cofactor is FMN.

It catalyses the reaction N-[(R)-4-phosphopantothenoyl]-L-cysteine + H(+) = (R)-4'-phosphopantetheine + CO2. The catalysed reaction is (R)-4'-phosphopantothenate + L-cysteine + CTP = N-[(R)-4-phosphopantothenoyl]-L-cysteine + CMP + diphosphate + H(+). The protein operates within cofactor biosynthesis; coenzyme A biosynthesis; CoA from (R)-pantothenate: step 2/5. It participates in cofactor biosynthesis; coenzyme A biosynthesis; CoA from (R)-pantothenate: step 3/5. With respect to regulation, two related chemical scaffolds that potently inhibit the activity of the CoaB moiety of CoaBC through a cryptic allosteric site that sits in the dimer interface region of the CoaB enzyme were identified. Catalyzes two sequential steps in the biosynthesis of coenzyme A. In the first step cysteine is conjugated to 4'-phosphopantothenate to form 4-phosphopantothenoylcysteine. In the second step the latter compound is decarboxylated to form 4'-phosphopantotheine. The chain is Coenzyme A biosynthesis bifunctional protein CoaBC from Mycolicibacterium smegmatis (strain ATCC 700084 / mc(2)155) (Mycobacterium smegmatis).